Reading from the N-terminus, the 292-residue chain is Small ribosomal subunit biogenesis GTPase RsgA (292 aa).

Positions Arg-64–Leu-221 constitute a CP-type G domain. GTP is bound by residues Asn-113–Asp-116 and Gly-164–Thr-172. 4 residues coordinate Zn(2+): Cys-245, Cys-250, His-252, and Cys-258.

Belongs to the TRAFAC class YlqF/YawG GTPase family. RsgA subfamily. Monomer. Associates with 30S ribosomal subunit, binds 16S rRNA. Zn(2+) is required as a cofactor.

It localises to the cytoplasm. In terms of biological role, one of several proteins that assist in the late maturation steps of the functional core of the 30S ribosomal subunit. Helps release RbfA from mature subunits. May play a role in the assembly of ribosomal proteins into the subunit. Circularly permuted GTPase that catalyzes slow GTP hydrolysis, GTPase activity is stimulated by the 30S ribosomal subunit. This is Small ribosomal subunit biogenesis GTPase RsgA from Clostridium botulinum (strain Loch Maree / Type A3).